The sequence spans 506 residues: Aminoaldehyde dehydrogenase 1b (506 aa).

Na(+) is bound at residue D102. NAD(+) contacts are provided by residues T162 to W164 and K188 to E191. Na(+) is bound at residue L192. Residues S242–T245 and E263 contribute to the NAD(+) site. E263 acts as the Proton acceptor in catalysis. The Nucleophile role is filled by C297. 2 residues coordinate NAD(+): E396 and W462.

Belongs to the aldehyde dehydrogenase family.

The enzyme catalyses 4-aminobutanal + NAD(+) + H2O = 4-aminobutanoate + NADH + 2 H(+). The catalysed reaction is 3-aminopropanal + NAD(+) + H2O = beta-alanine + NADH + 2 H(+). It catalyses the reaction 4-(trimethylamino)butanal + NAD(+) + H2O = 4-(trimethylamino)butanoate + NADH + 2 H(+). It carries out the reaction 4-guanidinobutanal + NAD(+) + H2O = 4-guanidinobutanoate + NADH + 2 H(+). The enzyme catalyses betaine aldehyde + NAD(+) + H2O = glycine betaine + NADH + 2 H(+). It functions in the pathway amine and polyamine biosynthesis; betaine biosynthesis via choline pathway; betaine from betaine aldehyde: step 1/1. Dehydrogenase that catalyzes the oxidation of several aminoaldehydes. Metabolizes and detoxifies aldehyde products of polyamine degradation to non-toxic amino acids. Catalyzes the oxidation of 4-aminobutanal and 3-aminopropanal to 4-aminobutanoate and beta-alanine, respectively. Catalyzes the oxidation of 4-(trimethylamino)butanal and 4-guanidinobutanal to 4-trimethylammoniobutanoate and 4-guanidinobutanoate, respectively. Catalyzes the oxidation of betaine aldehyde to glycine betaine. This Zea mays (Maize) protein is Aminoaldehyde dehydrogenase 1b.